A 306-amino-acid chain; its full sequence is Ribonuclease Z (306 aa).

Residues His-63, His-65, Asp-67, His-68, His-141, Asp-208, and His-266 each contribute to the Zn(2+) site. The active-site Proton acceptor is Asp-67.

This sequence belongs to the RNase Z family. In terms of assembly, homodimer. It depends on Zn(2+) as a cofactor.

The enzyme catalyses Endonucleolytic cleavage of RNA, removing extra 3' nucleotides from tRNA precursor, generating 3' termini of tRNAs. A 3'-hydroxy group is left at the tRNA terminus and a 5'-phosphoryl group is left at the trailer molecule.. Zinc phosphodiesterase, which displays some tRNA 3'-processing endonuclease activity. Probably involved in tRNA maturation, by removing a 3'-trailer from precursor tRNA. In Protochlamydia amoebophila (strain UWE25), this protein is Ribonuclease Z.